We begin with the raw amino-acid sequence, 532 residues long: Egg peptide speract receptor (532 aa).

An N-terminal signal peptide occupies residues 1 to 30 (MGLPMMLQQYCWAACLVICIAISSVDDVGA). Residues 31 to 491 (EQNYGREAVE…VVCEGSTAPP (461 aa)) lie on the Extracellular side of the membrane. 4 SRCR domains span residues 43–144 (IRLI…VECL), 153–257 (LRMI…VVCK), 264–366 (IRLM…VVCA), and 382–485 (VRIV…VVCE). 12 disulfides stabilise this stretch: Cys68–Cys133, Cys81–Cys143, Cys112–Cys122, Cys178–Cys244, Cys191–Cys256, Cys223–Cys233, Cys289–Cys355, Cys302–Cys365, Cys335–Cys345, Cys406–Cys475, Cys419–Cys484, and Cys454–Cys465. N-linked (GlcNAc...) asparagine glycans are attached at residues Asn78 and Asn115. An N-linked (GlcNAc...) asparagine glycan is attached at Asn459. The chain crosses the membrane as a helical span at residues 492–520 (SGMSIAVIGGAAGGGVAGLAVAAFAFYYI). At 521-532 (KFVKPAGGGGQA) the chain is on the cytoplasmic side.

It localises to the membrane. Functionally, receptor for the egg peptide speract. The sequence is that of Egg peptide speract receptor from Strongylocentrotus purpuratus (Purple sea urchin).